The chain runs to 329 residues: NADH-quinone oxidoreductase subunit H (329 aa).

9 consecutive transmembrane segments (helical) span residues 9–29 (LIKI…ATYI), 42–62 (GPSY…IKLF), 75–95 (LIFT…MAPI), 117–137 (IGFL…ILAG), 154–174 (IQLL…LMVV), 188–208 (GGFL…FLIA), 238–258 (LKWG…SFVI), 269–291 (WGFI…LSMW), and 309–329 (WKIM…IILI).

Belongs to the complex I subunit 1 family. NDH-1 is composed of 14 different subunits. Subunits NuoA, H, J, K, L, M, N constitute the membrane sector of the complex.

The protein resides in the cell inner membrane. It catalyses the reaction a quinone + NADH + 5 H(+)(in) = a quinol + NAD(+) + 4 H(+)(out). In terms of biological role, NDH-1 shuttles electrons from NADH, via FMN and iron-sulfur (Fe-S) centers, to quinones in the respiratory chain. The immediate electron acceptor for the enzyme in this species is believed to be ubiquinone. Couples the redox reaction to proton translocation (for every two electrons transferred, four hydrogen ions are translocated across the cytoplasmic membrane), and thus conserves the redox energy in a proton gradient. This subunit may bind ubiquinone. This is NADH-quinone oxidoreductase subunit H from Helicobacter acinonychis (strain Sheeba).